Consider the following 66-residue polypeptide: Large ribosomal subunit protein bL31 (66 aa).

Cysteine 16, cysteine 18, cysteine 36, and cysteine 39 together coordinate Zn(2+).

It belongs to the bacterial ribosomal protein bL31 family. Type A subfamily. As to quaternary structure, part of the 50S ribosomal subunit. Requires Zn(2+) as cofactor.

Its function is as follows. Binds the 23S rRNA. The sequence is that of Large ribosomal subunit protein bL31 from Moorella thermoacetica (strain ATCC 39073 / JCM 9320).